Consider the following 777-residue polypeptide: Beta-hexosaminidase (777 aa).

A signal peptide spans 1–18 (MKRLTFGACICCLLSLMA). Cys-19 carries the N-palmitoyl cysteine lipid modification. The S-diacylglycerol cysteine moiety is linked to residue Cys-19. Residues 625–766 (APKPGLTIRT…VMIRLKGEEK (142 aa)) enclose the PA14 domain.

It belongs to the glycosyl hydrolase 20 family.

It is found in the cell outer membrane. It catalyses the reaction Hydrolysis of terminal non-reducing N-acetyl-D-hexosamine residues in N-acetyl-beta-D-hexosaminides.. This Porphyromonas gingivalis (strain ATCC BAA-308 / W83) protein is Beta-hexosaminidase (nahA).